We begin with the raw amino-acid sequence, 795 residues long: Phenylalanine--tRNA ligase beta subunit (795 aa).

Residues 39–148 enclose the tRNA-binding domain; the sequence is AAKFNGVLVG…SDAPVGTDLR (110 aa). Residues 401–476 form the B5 domain; the sequence is PKVTEVRLRR…RVYGYNSIPN (76 aa). Residues D454, D460, E463, and E464 each coordinate Mg(2+). Residues 701–794 form the FDX-ACB domain; that stretch reads SKFPSNRRDI…LAEQFNASLR (94 aa).

Belongs to the phenylalanyl-tRNA synthetase beta subunit family. Type 1 subfamily. In terms of assembly, tetramer of two alpha and two beta subunits. Mg(2+) is required as a cofactor.

The protein resides in the cytoplasm. It catalyses the reaction tRNA(Phe) + L-phenylalanine + ATP = L-phenylalanyl-tRNA(Phe) + AMP + diphosphate + H(+). This Pseudoalteromonas translucida (strain TAC 125) protein is Phenylalanine--tRNA ligase beta subunit.